The following is a 230-amino-acid chain: UPF0502 protein Patl_1161 (230 aa).

It belongs to the UPF0502 family.

The sequence is that of UPF0502 protein Patl_1161 from Pseudoalteromonas atlantica (strain T6c / ATCC BAA-1087).